The sequence spans 179 residues: Large ribosomal subunit protein uL5 (179 aa).

This sequence belongs to the universal ribosomal protein uL5 family. As to quaternary structure, part of the 50S ribosomal subunit; part of the 5S rRNA/L5/L18/L25 subcomplex. Contacts the 5S rRNA and the P site tRNA. Forms a bridge to the 30S subunit in the 70S ribosome.

Functionally, this is one of the proteins that bind and probably mediate the attachment of the 5S RNA into the large ribosomal subunit, where it forms part of the central protuberance. In the 70S ribosome it contacts protein S13 of the 30S subunit (bridge B1b), connecting the 2 subunits; this bridge is implicated in subunit movement. Contacts the P site tRNA; the 5S rRNA and some of its associated proteins might help stabilize positioning of ribosome-bound tRNAs. The protein is Large ribosomal subunit protein uL5 of Nitratidesulfovibrio vulgaris (strain DSM 19637 / Miyazaki F) (Desulfovibrio vulgaris).